The following is a 100-amino-acid chain: uncharacterized protein (100 aa).

This is an uncharacterized protein from Homo sapiens (Human).